The chain runs to 117 residues: Mediator of RNA polymerase II transcription subunit 11 (117 aa).

N-acetylalanine is present on alanine 2.

Belongs to the Mediator complex subunit 11 family. As to quaternary structure, component of the Mediator complex, which is composed of MED1, MED4, MED6, MED7, MED8, MED9, MED10, MED11, MED12, MED13, MED13L, MED14, MED15, MED16, MED17, MED18, MED19, MED20, MED21, MED22, MED23, MED24, MED25, MED26, MED27, MED29, MED30, MED31, CCNC, CDK8 and CDC2L6/CDK11. The MED12, MED13, CCNC and CDK8 subunits form a distinct module termed the CDK8 module. Mediator containing the CDK8 module is less active than Mediator lacking this module in supporting transcriptional activation. Individual preparations of the Mediator complex lacking one or more distinct subunits have been variously termed ARC, CRSP, DRIP, PC2, SMCC and TRAP.

The protein localises to the nucleus. Functionally, component of the Mediator complex, a coactivator involved in the regulated transcription of nearly all RNA polymerase II-dependent genes. Mediator functions as a bridge to convey information from gene-specific regulatory proteins to the basal RNA polymerase II transcription machinery. Mediator is recruited to promoters by direct interactions with regulatory proteins and serves as a scaffold for theee assembly of a functional pre-initiation complex with RNA polymerase II and the general transcription factors. This chain is Mediator of RNA polymerase II transcription subunit 11 (MED11), found in Homo sapiens (Human).